An 81-amino-acid chain; its full sequence is Cytochrome c oxidase subunit 7A1, mitochondrial (81 aa).

The N-terminal 21 residues, 1-21 (MRHLLGLPQLASRAFSTTVRQ), are a transit peptide targeting the mitochondrion. Residues 51 to 72 (ILYRLTMTLTVVGTGYSLYWLL) traverse the membrane as a helical segment.

It belongs to the cytochrome c oxidase VIIa family. As to quaternary structure, component of the complex IV (CIV, cytochrome c oxidase). The complex exists as a monomer or a dimer and forms supercomplexes (SCs) in the inner mitochondrial membrane with NADH-ubiquinone oxidoreductase (complex I, CI) and ubiquinol-cytochrome c oxidoreductase (cytochrome b-c1 complex, complex III, CIII), resulting in different assemblies (supercomplex SCI(1)III(2)IV(1) and megacomplex MCI(2)III(2)IV(2)).

It is found in the mitochondrion inner membrane. The protein operates within energy metabolism; oxidative phosphorylation. Its function is as follows. Component of the mitochondrial respiratory complex IV (CIV, also named cytochrome c oxidase complex), the last enzyme in the mitochondrial electron transport chain which drives oxidative phosphorylation. The CIV complex is the component of the respiratory chain that catalyzes the reduction of oxygen to water. Acts as an assembly factor that specifically drives the homodimerization of CIV complexes, mediating the formation of mitochondrial respiratory supercomplexes (respirasomes) containing two CIV: supercomplxes with two molecules of CIV show improved activity. The protein is Cytochrome c oxidase subunit 7A1, mitochondrial of Danio rerio (Zebrafish).